Reading from the N-terminus, the 89-residue chain is UPF0298 protein GTNG_0961 (89 aa).

The protein belongs to the UPF0298 family.

The protein resides in the cytoplasm. The chain is UPF0298 protein GTNG_0961 from Geobacillus thermodenitrificans (strain NG80-2).